Reading from the N-terminus, the 101-residue chain is Urease subunit beta (101 aa).

Belongs to the urease beta subunit family. Heterotrimer of UreA (gamma), UreB (beta) and UreC (alpha) subunits. Three heterotrimers associate to form the active enzyme.

Its subcellular location is the cytoplasm. It carries out the reaction urea + 2 H2O + H(+) = hydrogencarbonate + 2 NH4(+). Its pathway is nitrogen metabolism; urea degradation; CO(2) and NH(3) from urea (urease route): step 1/1. This Burkholderia ambifaria (strain ATCC BAA-244 / DSM 16087 / CCUG 44356 / LMG 19182 / AMMD) (Burkholderia cepacia (strain AMMD)) protein is Urease subunit beta.